A 250-amino-acid polypeptide reads, in one-letter code: Small ribosomal subunit protein uS3 (250 aa).

In terms of domain architecture, KH type-2 spans 39–111 (IRTLIKNHYP…KVQINIFEVK (73 aa)).

It belongs to the universal ribosomal protein uS3 family. Part of the 30S ribosomal subunit. Forms a tight complex with proteins S10 and S14.

Functionally, binds the lower part of the 30S subunit head. Binds mRNA in the 70S ribosome, positioning it for translation. The sequence is that of Small ribosomal subunit protein uS3 from Rubus stunt phytoplasma.